The primary structure comprises 97 residues: Large ribosomal subunit protein uL23 (97 aa).

It belongs to the universal ribosomal protein uL23 family. Part of the 50S ribosomal subunit. Contacts protein L29, and trigger factor when it is bound to the ribosome.

In terms of biological role, one of the early assembly proteins it binds 23S rRNA. One of the proteins that surrounds the polypeptide exit tunnel on the outside of the ribosome. Forms the main docking site for trigger factor binding to the ribosome. The polypeptide is Large ribosomal subunit protein uL23 (Sinorhizobium medicae (strain WSM419) (Ensifer medicae)).